The chain runs to 303 residues: Sulfate adenylyltransferase subunit 2 (303 aa).

Belongs to the PAPS reductase family. CysD subfamily. In terms of assembly, heterodimer composed of CysD, the smaller subunit, and CysN.

The catalysed reaction is sulfate + ATP + H(+) = adenosine 5'-phosphosulfate + diphosphate. Its pathway is sulfur metabolism; hydrogen sulfide biosynthesis; sulfite from sulfate: step 1/3. Its function is as follows. With CysN forms the ATP sulfurylase (ATPS) that catalyzes the adenylation of sulfate producing adenosine 5'-phosphosulfate (APS) and diphosphate, the first enzymatic step in sulfur assimilation pathway. APS synthesis involves the formation of a high-energy phosphoric-sulfuric acid anhydride bond driven by GTP hydrolysis by CysN coupled to ATP hydrolysis by CysD. The protein is Sulfate adenylyltransferase subunit 2 of Aliarcobacter butzleri (strain RM4018) (Arcobacter butzleri).